The sequence spans 84 residues: Small ribosomal subunit protein uS17 (84 aa).

This sequence belongs to the universal ribosomal protein uS17 family. As to quaternary structure, part of the 30S ribosomal subunit.

One of the primary rRNA binding proteins, it binds specifically to the 5'-end of 16S ribosomal RNA. This is Small ribosomal subunit protein uS17 from Clostridium perfringens (strain SM101 / Type A).